The chain runs to 114 residues: Cystatin Pr15a (114 aa).

Positions 1 to 22 are cleaved as a signal peptide; it reads MFTVKLLAFMVVAVSLQHLAEA. A Cystatin domain is found at 29 to 83; that stretch reads GCPVEVDPNREDIKKSLAHVMAAKNSPDELVRIIKASTQVVNGIKYKVVFEVKNP.

This sequence belongs to the cystatin family. As to expression, expressed by the venom gland (anterior main gland) (at protein level).

Its subcellular location is the secreted. This is Cystatin Pr15a from Platymeris rhadamanthus (Red spot assassin bug).